A 942-amino-acid chain; its full sequence is MERAMEQLNRLTRSLRRARTVELPDDNETAVYTLMPMVMADQHRSVSELLSNSKFDVNYAFGRVKRSLLHIAANCGSVECLVLLLKKGANPNYQDISGCTPLHLAARNGQKKCMSKLLEYSADVNICNNEGLTAIHWLAVNGRTELLHDLVQHVSNVDVEDAMGQTALHVACQNGHKTTVQCLLDSGADINRPNVSGATPLYFACSHGQRDTAQILLMRGAKYLPDKNGITPLDLCVQGGYGETCEVLIQYHPRLFQTIIQMTQNEDLRENMLRQVLEHLSQQSESQYLKILTSLAEVATTNGHKLLSLSSNYEAQMKSLLRIVRIFCHVFRIGPSSPSNGNDMGYNGNKTPRSQVFKVRKVYDVVRKIDVKEMNFTKHAFINQTSHEQEPLELLWHSLDEWLVLIATELMKNKRDSANITSILLKQKGPDHQDATPTPSFAAAGTESRKELSTDTGDSKTYEVAGKQEAYADCQDVISMTANRLSAVIQAFYMCCSCQMPQGMTSPRFIEFVCKHDDVLKCFVNRNPKIIFDHFHFLLECPELMSRFMHIIKAQPFKDRCEWFYEHLHSGQPDSDMVHRPVNENDILLVHRDSIFRSSCEVVSKANCAKLKQGIAVRFHGEEGMGQGVVREWFDILSSEIVNPDYALFTQSADGTTFQPNSNSSVNPDHLNYFRFAGQILGLALNHRQLVNIYFTRSFYKHILGIPVNYQDVASIDPEYAKNLQWILDNDISDLGLELTFSVETDVFGAMEEVPLKPGGASILVTQENKAEYVQLVTELRMTRAIQPQINAFLQGFHMFIPPSLIQLFDEYELELLLSGMPEIDVNDWLKNTEYTSGYERGDQVIQWFWDVVEELTQEERVLLLQFVTGSSRVPHGGFAHIMGGSGLQNFTIAAVPYTANLLPTSSTCINMLKLPEYPSKEILKDRLLVALHCGSYGYTMA.

7 ANK repeats span residues 23 to 55 (LPDDNETAVYTLMPMVMADQHRSVSELLSNSKF), 64 to 93 (VKRSLLHIAANCGSVECLVLLLKKGANPNY), 97 to 126 (SGCTPLHLAARNGQKKCMSKLLEYSADVNI), 130 to 159 (EGLTAIHWLAVNGRTELLHDLVQHVSNVDV), 163 to 192 (MGQTALHVACQNGHKTTVQCLLDSGADINR), 196 to 226 (SGATPLYFACSHGQRDTAQILLMRGAKYLPD), and 228 to 253 (NGITPLDLCVQGGYGETCEVLIQYHP). The disordered stretch occupies residues 428 to 459 (KGPDHQDATPTPSFAAAGTESRKELSTDTGDS). Over residues 447-459 (ESRKELSTDTGDS) the composition is skewed to basic and acidic residues. The HECT domain occupies 607–942 (NCAKLKQGIA…HCGSYGYTMA (336 aa)). Residue Cys909 is the Glycyl thioester intermediate of the active site.

The protein resides in the golgi apparatus. It localises to the golgi stack membrane. Its subcellular location is the cytoplasm. The protein localises to the endoplasmic reticulum. The catalysed reaction is S-ubiquitinyl-[E2 ubiquitin-conjugating enzyme]-L-cysteine + [acceptor protein]-L-lysine = [E2 ubiquitin-conjugating enzyme]-L-cysteine + N(6)-ubiquitinyl-[acceptor protein]-L-lysine.. It functions in the pathway protein modification; protein ubiquitination. In terms of biological role, E3 ubiquitin-protein ligase involved in Golgi membrane fusion and regulation of small GTPases. Acts as a regulator of Golgi membrane dynamics during the cell cycle: recruited to Golgi membrane by Rab proteins and regulates postmitotic Golgi membrane fusion. Acts by mediating ubiquitination during mitotic Golgi disassembly, ubiquitination serving as a signal for Golgi reassembly later, after cell division. The chain is E3 ubiquitin-protein ligase HACE1 (HACE1) from Gallus gallus (Chicken).